A 2629-amino-acid polypeptide reads, in one-letter code: MEKLCGHVPGHSDILSLKNRCLTMLPDLQPLEKIHGHRSVHSDILSLENQCLTMLSDLQPTERIDGHISVHPDILSLENRCLTMLPDLQPLEKLCGHMSSHPDVLSLENQCLATLPTVKSTALTSPLLQGLHISHTAQADLHSLKTSNCLLPELPTKKTPCFSEELDLPPGPRALKSMSATAQVQEVALGQWCVSKEKEFQEEESTEVPMPLYSLSLEEEEVEAPVLKLTSGDSGFHPETTDQVLQEKKMALLTLLCSALASNVNVKDASDLTRASILEVCSALASLEPEFILKASLYARQQLNLRDIANTVLAVAALLPACRPHVRRYYSAIVHLPSDWIQVAEFYQSLAEGDEKKLVSLPACLRAAMTDKFAEFDEYQLAKYNPRKHRSKRRSRQPPRPQKTERPFSERGKCFPKSLWPLKNEQITFEAAYNAMPEKNRLPRFTLKKLVEYLHIHKPAQHVQALLGYRYPATLELFSRSHLPGPWESSRAGQRMKLRRPETWERELSLRGNKASVWEELIDNGKLPFMAMLRNLCNLLRTGISARHHELVLQRLQHEKSVVHSRQFPFRFLNAHDSIDKLEAQLRSKASPFPSNTTLMKRIMIRNSKKNRRPASRKHLCTLTRRQLRAAMTIPVMYEQLKREKLRLHKARQWNCDVELLERYRQALETAVNLSVKHNLSPMPGRTLLVYLTDANADRLCPKSHSQGPPLNYVLLLIGMMVARAEQVTVCLCGGGFVKTPVLTADEGILKTAIKLQAQVQELEGNDEWPLDTFGKYLLSLAVQRTPIDRVILFGQRMDTELLKVAKQIIWQHVNSKCLFVGVLLQKTQYISPNLNPNDVTLSGCTDGILKFIAEHGASRLLEHVGQLDKLFKIPPPPGKTQAPSLRPLEENIPGPLGPISQHGWRNIRLFISSTFRDMHGERDLLMRSVLPALQARVFPHRISLHAIDLRWGITEEETRRNRQLEVCLGEVENSQLFVGILGSRYGYIPPSYDLPDHPHFHWTHEYPSGRSVTEMEVMQFLNRGQRSQPSAQALIYFRDPDFLSSVPDAWKPDFISESEEAAHRVSELKRYLHEQKEVTCRSYSCEWGGVAAGRPYTGGLEEFGQLVLQDVWSMIQKQHLQPGAQLEQPTSISEDDLIQTSFQQLKTPTSPARPRLLQDTVQQLLLPHGRLSLVTGQAGQGKTAFLASLVSALKVPDQPNEPPFVFFHFAAARPDQCLALNLLRRLCTHLRQKLGELSALPSTYRGLVWELQQKLLLKFAQSLQPAQTLVLIIDGADKLVDRNGQLISDWIPKSLPRRVHLVLSVSSDSGLGETLQQSQGAYVVALGSLVPSSRAQLVREELALYGKRLEESPFNNQMRLLLAKQGSSLPLYLHLVTDYLRLFTLYEQVSERLRTLPATLPLLLQHILSTLEQEHGHDVLPQALTALEVTRSGLTVDQLHAILSTWLILPKETKSWEEVLAASHSGNPFPLCPFAYLVQSLRSLLGEGPVERPGARLCLSDGPLRTTIKRRYGKRLGLEKTAHVLIAAHLWKTCDPDASGTFRSCPPEALKDLPYHLLQSGNHGLLAEFLTNLHVVAAYLEVGLVPDLLEAHVLYASSKPEANQKLPAADVAVFHTFLRQQASLLTQYPLLLLQQAASQPEESPVCCQAPLLTQRWHDQFTLKWINKPQTLKGQQSLSLTMSSSPTAVAFSPNGQRAAVGTASGTIYLLNLKTWQEEKAVVSGCDGISSFAFLSDTALFLTTFDGHLELWDLQHGCWVFQTKAHQYQITGCCLSPDRRLLATVCLGGYLKLWDTVRGQLAFQYTHPKSLNCVAFHPEGQVVATGSWAGSITFFQADGLKVTKELGAPGPSVCSLAFNKPGKIVAVGRIDGTVELWAWQEGARLAAFPAQCGCVSAVLFLHAGDRFLTAGEDGKAQLWSGFLGRPRGCLGSLPLSPALSVALNPDGDQVAVGYREDGINIYKISSGSQGPQHQELNVAVSALVWLSPSVLVSGAEDGSLHGWMFKGDSLHSLWLLSRYQKPVLGLAASRELMAAASEDFTVRLWPRQLLTQPHVHAVELPCCAELRGHEGPVCCCSFSPDGGILATAGRDRNLLCWDMKIAQAPLLIHTFSSCHRDWITGCAWTKDNILVSCSSDGSVGLWNPEAGQQLGQFSGHQSAVSAVVAVEEHIVSVSRDGTLKVWDHQGVELTSIPAHSGPISQCAAALEPRPGGQPGSELLVVTVGLDGATKLWHPLLVCQIRTLQGHSGPVTAAAASEASGLLLTSDDSSVQLWQIPKEADDSYKPRSSVAITAVAWAPDGSMVVSGNEAGELTLWQQAKAVATAQAPGRVSHLIWYSANSFFVLSANENVSEWQVGLRKGSTSTSSSLHLKRVLQEDWGVLTGLGLAPDGQSLILMKEDVELLEMKPGSIPSSICRRYGVHSSILCTSKEYGLFYLQQGDSGLLSILEQKESGEFEEILDFNLNLNNPNGSPVSITQAKPESESSLLCATSDGMLWNLSECTSEGEWIVDNIWQKKAKKPKTQTLETELSPHSELDFSIDCWIDPTNLKAQQCKKIHLGSVTALHVLPGLLVTASKDRDVKLWERPSMQLLGLFRCEGPVSCLEPWMEPSSPLQLAVGDTQGNLYFLSWE.

TEP1 N-terminal repeat units follow at residues 1–30 (MEKL…DLQP), 31–60 (LEKI…DLQP), 61–90 (TERI…DLQP), and 91–120 (LEKL…TVKS). Residues 227-685 (LKLTSGDSGF…VKHNLSPMPG (459 aa)) enclose the TROVE domain. A compositionally biased stretch (basic residues) spans 386–397 (PRKHRSKRRSRQ). The tract at residues 386–412 (PRKHRSKRRSRQPPRPQKTERPFSERG) is disordered. Over residues 402-412 (QKTERPFSERG) the composition is skewed to basic and acidic residues. The region spanning 1171–1578 (RLSLVTGQAG…EFLTNLHVVA (408 aa)) is the NACHT domain. Position 1177-1184 (1177-1184 (GQAGQGKT)) interacts with ATP. WD repeat units follow at residues 1420–1462 (VLPQ…EVLA), 1681–1720 (TMSS…EEKA), 1723–1761 (SGCD…WVFQ), 1764–1803 (AHQY…LAFQ), 1805–1844 (THPK…VTKE), 1847–1886 (APGP…RLAA), 1889–1930 (AQCG…GCLG), 1932–1971 (LPLS…QGPQ), 1974–2013 (ELNV…HSLW), 2015–2054 (LSRY…QPHV), 2067–2106 (GHEG…APLL), 2113–2151 (CHRD…QLGQ), 2154–2191 (GHQS…LTSI), 2193–2241 (AHSG…QIRT), 2244–2282 (GHSG…DDSY), 2285–2324 (RSSV…ATAQ), 2326–2362 (PGRV…GSTS), 2375–2424 (EDWG…SSIL), 2467–2507 (PNGS…GEWI), 2555–2592 (IHLG…LLGL), and 2594–2628 (RCEG…FLSW).

As to quaternary structure, associated component of the telomerase holoenzyme complex. Component of the vault ribonucleoprotein particle, at least composed of MVP, PARP4 and one or more vault RNAs (vRNAs). Binds to VAULTRC1, VAULTRC2 and VAULTRC4/hvg4 vRNAs. As to expression, ubiquitous.

The protein resides in the nucleus. It localises to the chromosome. Its subcellular location is the telomere. In terms of biological role, component of the telomerase ribonucleoprotein complex that is essential for the replication of chromosome termini. Also a component of the ribonucleoprotein vaults particle, a multi-subunit structure involved in nucleo-cytoplasmic transport. Responsible for the localizing and stabilizing vault RNA (vRNA) association in the vault ribonucleoprotein particle. This Mus musculus (Mouse) protein is Telomerase protein component 1 (Tep1).